The sequence spans 163 residues: N5-carboxyaminoimidazole ribonucleotide mutase (163 aa).

Substrate is bound by residues Ser-11, Asp-14, and Arg-41.

The protein belongs to the AIR carboxylase family. Class I subfamily.

It catalyses the reaction 5-carboxyamino-1-(5-phospho-D-ribosyl)imidazole + H(+) = 5-amino-1-(5-phospho-D-ribosyl)imidazole-4-carboxylate. It functions in the pathway purine metabolism; IMP biosynthesis via de novo pathway; 5-amino-1-(5-phospho-D-ribosyl)imidazole-4-carboxylate from 5-amino-1-(5-phospho-D-ribosyl)imidazole (N5-CAIR route): step 2/2. Its function is as follows. Catalyzes the conversion of N5-carboxyaminoimidazole ribonucleotide (N5-CAIR) to 4-carboxy-5-aminoimidazole ribonucleotide (CAIR). The chain is N5-carboxyaminoimidazole ribonucleotide mutase from Pseudomonas aeruginosa (strain ATCC 15692 / DSM 22644 / CIP 104116 / JCM 14847 / LMG 12228 / 1C / PRS 101 / PAO1).